The chain runs to 602 residues: MDHFARVSLVAALLYTNTWAKTVRETLRITWEEGAPNGQQRELIYINGRFPGPNLVWDEDDDVEVTVINDMTQSVTVHWHGLDQRPIQPGDSFVHKFKAFPPGNHWYHSHQKMSLVDGLYGAVHVRPKGDRKGLWSQISQDDKDIEAMEKAACDPEYLVVSDWSQYTSDEYWKISNDSGLPVFCLDSILVNGKGEVYCPGQKFLQGELAPGVLDAFPPGTEVSDKGCFSPALDRIKGGPWNMTERPDLIPPHVETGCVASRHENETIVVDPGRNNGWVSMHIVAAATIAQIAISFDSHKFWLYEVDGNYVNPREYFSAIISAGETFSIMMKLDQEPGRYTVRIPNTGASQVFSAFAEMVYKGHEENDKKLGEARLSYGGVPTSPEIKNNSYFPWKLDTDHMSPWPPSTPRPGNADEEHLLVLGRVGSPNNHTMNAKYLYPLGFRDEEPLLFYPNATLGTENEGLLLRTRNASWVDLIMQVSTLAGDEVAFKHFIHKHGGKTWRIGFGTGVWNYSSVQEAIQARPNDFNLETPGFRDTWITAPSASGEKHWSVLRYYVDNPGPWLLHCHIELHLMGGMGMVIMDGVDAWPDQLPEQYRLGKRL.

The signal sequence occupies residues 1 to 20 (MDHFARVSLVAALLYTNTWA). Plastocyanin-like domains lie at 30 to 128 (TWEE…VRPK) and 157 to 345 (YLVV…RIPN). His-78, His-80, His-108, and His-110 together coordinate Cu cation. N-linked (GlcNAc...) asparagine glycosylation is found at Asn-176, Asn-241, Asn-264, Asn-388, Asn-430, Asn-454, and Asn-470. The region spanning 461–584 (NEGLLLRTRN…GGMGMVIMDG (124 aa)) is the Plastocyanin-like 3 domain. 3 residues coordinate Cu cation: His-492, His-495, and His-497. N-linked (GlcNAc...) asparagine glycosylation occurs at Asn-512. Cu cation contacts are provided by His-566, Cys-567, His-568, and His-572.

Belongs to the multicopper oxidase family. Requires Cu cation as cofactor.

It is found in the cell surface. Its pathway is pigment biosynthesis. In terms of biological role, laccase; part of the Pks1 gene cluster that mediates the biosynthesis of an anthraquinone derivative pigment that contributes to conidial pigmentation that provides protection from UV radiation, heat and cold stress. The polyketide synthase Pks1 produces 1-acetyl-2,4,6,8-tetrahydroxy-9,10-anthraquinone though condensation of acetyl-CoA with malonyl-CoA. The dehydratase EthD and the laccase Mlac1 further convert the anthraquinone derivative into the final conidial pigment. This Metarhizium album (strain ARSEF 1941) protein is Laccase 1.